Reading from the N-terminus, the 372-residue chain is Serine protease 44 (372 aa).

Positions 1–25 (MAFQGCDCFGLLVWLLLLQTRLGKA) are cleaved as a signal peptide. At 26–351 (RMVPGTPSLS…KELSRASCWK (326 aa)) the chain is on the extracellular side. A disordered region spans residues 31–72 (TPSLSPLPSENGLDDSGVNPQERPLTGMPETSLPRKPGDSTR). The Peptidase S1 domain maps to 112–345 (IVGGRPAPAR…YRDWIIKELS (234 aa)). C137 and C153 are disulfide-bonded. Residues H152 and D197 each act as charge relay system in the active site. A glycan (N-linked (GlcNAc...) asparagine) is linked at N208. 3 disulfides stabilise this stretch: C231/C303, C262/C283, and C293/C321. S297 (charge relay system) is an active-site residue. The helical transmembrane segment at 352–372 (LSGFLVLSVCLVLHLAIVVAL) threads the bilayer.

The protein belongs to the peptidase S1 family. Testis-specific. Expressed by primary and secondary spermatocytes.

The protein resides in the membrane. The protein localises to the cytoplasm. In terms of biological role, lacks protease activity in vitro. This is Serine protease 44 from Mus musculus (Mouse).